The sequence spans 445 residues: Inositol-pentakisphosphate 2-kinase IPK1 (445 aa).

ATP contacts are provided by residues 19-22 (GAAN) and R40. R127 contributes to the substrate binding site. ATP-binding positions include 144-146 (SDH) and 162-164 (EIK). An EXKPK motif motif is present at residues 162–166 (EIKAK). Residues K166, K196, and N234 each contribute to the substrate site. ATP is bound at residue R237. Zn(2+) is bound by residues H312, C322, C325, and H341. A substrate-binding site is contributed by D363. D402 contributes to the ATP binding site. K406, K410, and Y414 together coordinate substrate.

Belongs to the IPK1 type 2 family. Requires Zn(2+) as cofactor.

It catalyses the reaction 1D-myo-inositol 1,3,4,5,6-pentakisphosphate + ATP = 1D-myo-inositol hexakisphosphate + ADP + H(+). In terms of biological role, phosphorylates Ins(1,3,4,5,6)P5 at position 2 to form Ins(1,2,3,4,5,6)P6 (InsP6 or phytate). Phytate is a regulator of intracellular signaling, a highly abundant animal antinutrient, and a phosphate store in plant seeds. Also phosphorylates Ins(1,3,4,6)P4 and Ins(1,4,5,6)P4 to produce Ins(1,2,3,4,6)P5 and Ins(1,2,4,5,6)P5. The polypeptide is Inositol-pentakisphosphate 2-kinase IPK1 (Oryza sativa subsp. indica (Rice)).